The primary structure comprises 234 residues: Leucyl/phenylalanyl-tRNA--protein transferase (234 aa).

This sequence belongs to the L/F-transferase family.

It localises to the cytoplasm. It carries out the reaction N-terminal L-lysyl-[protein] + L-leucyl-tRNA(Leu) = N-terminal L-leucyl-L-lysyl-[protein] + tRNA(Leu) + H(+). The enzyme catalyses N-terminal L-arginyl-[protein] + L-leucyl-tRNA(Leu) = N-terminal L-leucyl-L-arginyl-[protein] + tRNA(Leu) + H(+). It catalyses the reaction L-phenylalanyl-tRNA(Phe) + an N-terminal L-alpha-aminoacyl-[protein] = an N-terminal L-phenylalanyl-L-alpha-aminoacyl-[protein] + tRNA(Phe). Its function is as follows. Functions in the N-end rule pathway of protein degradation where it conjugates Leu, Phe and, less efficiently, Met from aminoacyl-tRNAs to the N-termini of proteins containing an N-terminal arginine or lysine. This Salmonella gallinarum (strain 287/91 / NCTC 13346) protein is Leucyl/phenylalanyl-tRNA--protein transferase.